The primary structure comprises 622 residues: uncharacterized protein (622 aa).

The N-terminal stretch at M1–S20 is a signal peptide.

This is an uncharacterized protein from Methanocaldococcus jannaschii (strain ATCC 43067 / DSM 2661 / JAL-1 / JCM 10045 / NBRC 100440) (Methanococcus jannaschii).